A 307-amino-acid polypeptide reads, in one-letter code: UDP-3-O-acyl-N-acetylglucosamine deacetylase (307 aa).

Zn(2+) contacts are provided by His-80, His-239, and Asp-243. The active-site Proton donor is His-266.

This sequence belongs to the LpxC family. It depends on Zn(2+) as a cofactor.

It carries out the reaction a UDP-3-O-[(3R)-3-hydroxyacyl]-N-acetyl-alpha-D-glucosamine + H2O = a UDP-3-O-[(3R)-3-hydroxyacyl]-alpha-D-glucosamine + acetate. It functions in the pathway glycolipid biosynthesis; lipid IV(A) biosynthesis; lipid IV(A) from (3R)-3-hydroxytetradecanoyl-[acyl-carrier-protein] and UDP-N-acetyl-alpha-D-glucosamine: step 2/6. Catalyzes the hydrolysis of UDP-3-O-myristoyl-N-acetylglucosamine to form UDP-3-O-myristoylglucosamine and acetate, the committed step in lipid A biosynthesis. The sequence is that of UDP-3-O-acyl-N-acetylglucosamine deacetylase from Neisseria meningitidis serogroup C / serotype 2a (strain ATCC 700532 / DSM 15464 / FAM18).